A 369-amino-acid chain; its full sequence is L-lactate oxidase (369 aa).

An FMN hydroxy acid dehydrogenase domain is found at 13–369; the sequence is EKKLNVLNLD…KNAKLLNIRY (357 aa). Residue tyrosine 39 participates in pyruvate binding. FMN contacts are provided by residues 92 to 94, serine 121, and glutamine 143; that span reads PAA. A pyruvate-binding site is contributed by tyrosine 145. Residue threonine 171 participates in FMN binding. A pyruvate-binding site is contributed by arginine 180. FMN-binding residues include lysine 240 and serine 262. Pyruvate is bound by residues histidine 264 and arginine 267. Histidine 264 (proton acceptor) is an active-site residue. FMN is bound by residues 295 to 299 and arginine 319; that span reads DSGIR.

This sequence belongs to the FMN-dependent alpha-hydroxy acid dehydrogenase family. As to quaternary structure, homotetramer. Requires FMN as cofactor.

It carries out the reaction (S)-lactate + O2 = pyruvate + H2O2. Its function is as follows. Catalyzes the oxidation of (S)-lactate (L-lactate) to pyruvate, with a reduction of O2 to H2O2. May be involved in the utilization of L-lactate as an energy source for growth. The polypeptide is L-lactate oxidase (Lentilactobacillus hilgardii (strain ATCC 8290 / DSM 20176 / CCUG 30140 / JCM 1155 / KCTC 3500 / NBRC 15886 / NCIMB 8040 / NRRL B-1843 / 9)).